We begin with the raw amino-acid sequence, 490 residues long: Aspartyl/glutamyl-tRNA(Asn/Gln) amidotransferase subunit B (490 aa).

It belongs to the GatB/GatE family. GatB subfamily. Heterotrimer of A, B and C subunits.

The catalysed reaction is L-glutamyl-tRNA(Gln) + L-glutamine + ATP + H2O = L-glutaminyl-tRNA(Gln) + L-glutamate + ADP + phosphate + H(+). It carries out the reaction L-aspartyl-tRNA(Asn) + L-glutamine + ATP + H2O = L-asparaginyl-tRNA(Asn) + L-glutamate + ADP + phosphate + 2 H(+). Functionally, allows the formation of correctly charged Asn-tRNA(Asn) or Gln-tRNA(Gln) through the transamidation of misacylated Asp-tRNA(Asn) or Glu-tRNA(Gln) in organisms which lack either or both of asparaginyl-tRNA or glutaminyl-tRNA synthetases. The reaction takes place in the presence of glutamine and ATP through an activated phospho-Asp-tRNA(Asn) or phospho-Glu-tRNA(Gln). The protein is Aspartyl/glutamyl-tRNA(Asn/Gln) amidotransferase subunit B of Methylobacterium sp. (strain 4-46).